A 292-amino-acid chain; its full sequence is 33 kDa chaperonin (292 aa).

Cystine bridges form between Cys230/Cys232 and Cys263/Cys266.

This sequence belongs to the HSP33 family. Under oxidizing conditions two disulfide bonds are formed involving the reactive cysteines. Under reducing conditions zinc is bound to the reactive cysteines and the protein is inactive.

It is found in the cytoplasm. Redox regulated molecular chaperone. Protects both thermally unfolding and oxidatively damaged proteins from irreversible aggregation. Plays an important role in the bacterial defense system toward oxidative stress. The polypeptide is 33 kDa chaperonin (Shigella boydii serotype 4 (strain Sb227)).